Consider the following 220-residue polypeptide: MOB kinase activator-like 3 (220 aa).

The Zn(2+) site is built by Cys83, Cys88, His165, and His170.

Belongs to the MOB1/phocein family.

In Drosophila melanogaster (Fruit fly), this protein is MOB kinase activator-like 3 (Mob3).